The chain runs to 259 residues: Protein BEAN1 (259 aa).

Residues 36–56 (VLVASAVIGVVIILSCITIIV) form a helical membrane-spanning segment. Residues 71 to 89 (RHRHHRHHHHHHHHRRRRH) are compositionally biased toward basic residues. Disordered stretches follow at residues 71 to 91 (RHRH…RHRE) and 152 to 259 (VGPG…ERIV). Positions 171-187 (LTDSCPTLDGTSDSGSG) are enriched in polar residues. The segment covering 221 to 230 (GAGPPSGLLP) has biased composition (low complexity).

As to quaternary structure, interacts with NEDD4.

It localises to the membrane. This is Protein BEAN1 (BEAN1) from Homo sapiens (Human).